The chain runs to 179 residues: CASP-like protein 5A2 (179 aa).

Residues 1-24 are disordered; sequence MNVSHASVHPVEDPPAAATEVENP. The Cytoplasmic portion of the chain corresponds to 1-38; that stretch reads MNVSHASVHPVEDPPAAATEVENPPRVRMDDMEGMPGT. The chain crosses the membrane as a helical span at residues 39 to 59; the sequence is LLGLALRFFQFLFAAAALCVM. The Extracellular portion of the chain corresponds to 60-70; the sequence is ASTSDFPSVTA. The helical transmembrane segment at 71 to 91 threads the bilayer; it reads FCYLVAATGLQSLWSLALAMV. Residues 92–115 lie on the Cytoplasmic side of the membrane; that stretch reads DVYAIMVKRSLQNRRLVSLFAIGD. A helical membrane pass occupies residues 116 to 136; that stretch reads GVTSTLTFAAACASAGITVLI. Residues 137-155 lie on the Extracellular side of the membrane; sequence DNDLNSCAQNHCVQFETST. A helical transmembrane segment spans residues 156–176; that stretch reads ALAFISWFAALPSFLFNFWSL. Over 177–179 the chain is Cytoplasmic; it reads ASR.

The protein belongs to the Casparian strip membrane proteins (CASP) family. As to quaternary structure, homodimer and heterodimers.

It localises to the cell membrane. This Arabidopsis thaliana (Mouse-ear cress) protein is CASP-like protein 5A2.